The chain runs to 294 residues: Putative sugar lactone lactonase (294 aa).

Residues Glu-21, Asn-150, and Asp-201 each contribute to the a divalent metal cation site. Asp-201 (proton donor/acceptor) is an active-site residue.

Belongs to the SMP-30/CGR1 family. The cofactor is a divalent metal cation.

Its function is as follows. Involved in the degradation of galactose via the DeLey-Doudoroff pathway. The protein is Putative sugar lactone lactonase of Rhizobium meliloti (strain 1021) (Ensifer meliloti).